Reading from the N-terminus, the 233-residue chain is Protein Mis18-alpha (233 aa).

A phosphoserine mark is found at serine 36, serine 39, and serine 40. Residues 80 to 178 (PLVFLCSGCR…SVEAIESYVL (99 aa)) enclose the Mis18 domain. The Zn(2+) site is built by cysteine 85, cysteine 88, cysteine 141, and cysteine 144. Lysine 162 is covalently cross-linked (Glycyl lysine isopeptide (Lys-Gly) (interchain with G-Cter in SUMO2)). Position 233 is a phosphoserine (serine 233).

This sequence belongs to the mis18 family. As to quaternary structure, homodimer, and heterodimer with OIP5/MIS18B. Identified in a complex containing MIS18A, OIP5/MIS18B, MIS18BP1, RBBP7 and RBBP4. Detected in testis.

Its subcellular location is the nucleus. It localises to the chromosome. The protein localises to the centromere. Functionally, required for recruitment of CENPA to centromeres and normal chromosome segregation during mitosis. The polypeptide is Protein Mis18-alpha (MIS18A) (Homo sapiens (Human)).